A 134-amino-acid polypeptide reads, in one-letter code: Interleukin-5 (134 aa).

Residues 1–21 form the signal peptide; the sequence is MRMLLNLSLLALGAAYVSAFA. Residues Asn-76 and Asn-90 are each glycosylated (N-linked (GlcNAc...) asparagine).

The protein belongs to the IL-5 family. In terms of assembly, homodimer; disulfide-linked. Interacts with IL5RA. Interacts with CSF2RB.

It is found in the secreted. Functionally, homodimeric cytokine expressed predominantly by T-lymphocytes and NK cells that plays an important role in the survival, differentiation, and chemotaxis of eosinophils. Also acts on activated and resting B-cells to induce immunoglobulin production, growth, and differentiation. Mechanistically, exerts its biological effects through a receptor composed of IL5RA subunit and the cytokine receptor common subunit beta/CSF2RB. Binding to the receptor leads to activation of various kinases including LYN, SYK and JAK2 and thereby propagates signals through the RAS-MAPK and JAK-STAT5 pathways respectively. The polypeptide is Interleukin-5 (IL5) (Canis lupus familiaris (Dog)).